The primary structure comprises 208 residues: FMN-dependent NADH:quinone oxidoreductase 2 (208 aa).

It belongs to the azoreductase type 1 family. As to quaternary structure, homodimer. It depends on FMN as a cofactor.

The catalysed reaction is 2 a quinone + NADH + H(+) = 2 a 1,4-benzosemiquinone + NAD(+). It carries out the reaction N,N-dimethyl-1,4-phenylenediamine + anthranilate + 2 NAD(+) = 2-(4-dimethylaminophenyl)diazenylbenzoate + 2 NADH + 2 H(+). Functionally, quinone reductase that provides resistance to thiol-specific stress caused by electrophilic quinones. In terms of biological role, also exhibits azoreductase activity. Catalyzes the reductive cleavage of the azo bond in aromatic azo compounds to the corresponding amines. This Bacillus cereus (strain ATCC 10987 / NRS 248) protein is FMN-dependent NADH:quinone oxidoreductase 2.